The sequence spans 169 residues: Peptide methionine sulfoxide reductase MsrA (169 aa).

C13 is a catalytic residue.

The protein belongs to the MsrA Met sulfoxide reductase family.

The enzyme catalyses L-methionyl-[protein] + [thioredoxin]-disulfide + H2O = L-methionyl-(S)-S-oxide-[protein] + [thioredoxin]-dithiol. The catalysed reaction is [thioredoxin]-disulfide + L-methionine + H2O = L-methionine (S)-S-oxide + [thioredoxin]-dithiol. Has an important function as a repair enzyme for proteins that have been inactivated by oxidation. Catalyzes the reversible oxidation-reduction of methionine sulfoxide in proteins to methionine. This is Peptide methionine sulfoxide reductase MsrA from Mycolicibacterium gilvum (strain PYR-GCK) (Mycobacterium gilvum (strain PYR-GCK)).